The primary structure comprises 186 residues: Threonylcarbamoyl-AMP synthase (186 aa).

The YrdC-like domain occupies 2–186 (PNEFELAVAA…ARTGAIIRPS (185 aa)).

Belongs to the SUA5 family. TsaC subfamily.

Its subcellular location is the cytoplasm. The catalysed reaction is L-threonine + hydrogencarbonate + ATP = L-threonylcarbamoyladenylate + diphosphate + H2O. Required for the formation of a threonylcarbamoyl group on adenosine at position 37 (t(6)A37) in tRNAs that read codons beginning with adenine. Catalyzes the conversion of L-threonine, HCO(3)(-)/CO(2) and ATP to give threonylcarbamoyl-AMP (TC-AMP) as the acyladenylate intermediate, with the release of diphosphate. In Aeromonas hydrophila subsp. hydrophila (strain ATCC 7966 / DSM 30187 / BCRC 13018 / CCUG 14551 / JCM 1027 / KCTC 2358 / NCIMB 9240 / NCTC 8049), this protein is Threonylcarbamoyl-AMP synthase.